We begin with the raw amino-acid sequence, 239 residues long: Small ribosomal subunit protein uS2c (239 aa).

Belongs to the universal ribosomal protein uS2 family.

The protein localises to the plastid. It localises to the organellar chromatophore. The polypeptide is Small ribosomal subunit protein uS2c (rps2) (Paulinella chromatophora).